The sequence spans 164 residues: Methanogen homoaconitase small subunit 2 (164 aa).

Positions 26–29 match the YLRT motif; it reads YLRT.

It belongs to the LeuD family. LeuD type 2 subfamily. In terms of assembly, heterotetramer of 2 HacA and 2 HacB proteins. Cannot form a complex with LeuC.

The enzyme catalyses (2R)-homocitrate = (2R,3S)-homoisocitrate. The catalysed reaction is (2R)-homocitrate = cis-homoaconitate + H2O. It carries out the reaction (2R,3S)-homoisocitrate = cis-homoaconitate + H2O. It catalyses the reaction cis-(homo)2aconitate + H2O = (2R,3S)-iso(homo)2citrate. The enzyme catalyses cis-(homo)3aconitate + H2O = (2R,3S)-iso(homo)3citrate. It functions in the pathway organic acid metabolism; 2-oxosuberate biosynthesis. Component of a hydro-lyase with broad substrate specificity for cis-unsaturated tricarboxylic acids. Catalyzes both the reversible dehydration of (R)-homocitrate ((R)-2-hydroxybutane-1,2,4-tricarboxylate) to produce cis-homoaconitate ((Z)-but-1-ene-1,2,4-tricarboxylate), and its hydration to homoisocitrate ((1R,2S)-1-hydroxybutane-1,2,4-tricarboxylate). Is also able to hydrate the analogous longer chain substrates cis-homo(2)-aconitate, cis-homo(3)-aconitate. These reactions are part of the biosynthesis pathway of coenzyme B. This is Methanogen homoaconitase small subunit 2 (hacB2) from Methanosarcina acetivorans (strain ATCC 35395 / DSM 2834 / JCM 12185 / C2A).